Consider the following 288-residue polypeptide: Probable ketoamine kinase SAOUHSC_02908 (288 aa).

86-88 (TYL) serves as a coordination point for ATP. Asp-191 functions as the Proton acceptor in the catalytic mechanism.

It belongs to the fructosamine kinase family.

The enzyme catalyses N(6)-(D-ribulosyl)-L-lysine + ATP = N(6)-(3-O-phospho-D-ribulosyl)-L-lysine + ADP + H(+). It catalyses the reaction N(6)-(D-erythrulosyl)-L-lysine + ATP = N(6)-(3-O-phospho-D-erythrulosyl)-L-lysine + ADP + H(+). The catalysed reaction is N(6)-D-ribulosyl-L-lysyl-[protein] + ATP = N(6)-(3-O-phospho-D-ribulosyl)-L-lysyl-[protein] + ADP + H(+). It carries out the reaction N(6)-(D-erythrulosyl)-L-lysyl-[protein] + ATP = N(6)-(3-O-phospho-D-erythrulosyl)-L-lysyl-[protein] + ADP + H(+). Functionally, ketoamine kinase that phosphorylates ketoamines, such as erythruloselysine and ribuloselysine, on the third carbon of the sugar moiety to generate ketoamine 3-phosphate. Has higher activity on free lysine (erythruloselysine and ribuloselysine), than on ribuloselysine and erythruloselysine residues on glycated proteins. The protein is Probable ketoamine kinase SAOUHSC_02908 of Staphylococcus aureus (strain NCTC 8325 / PS 47).